Consider the following 387-residue polypeptide: Chorismate synthase (387 aa).

NADP(+) is bound by residues R42 and R48. FMN is bound by residues 131 to 133, 251 to 252, G295, 310 to 314, and R336; these read RSS, QA, and KPIPT.

The protein belongs to the chorismate synthase family. Homotetramer. The cofactor is FMNH2.

It carries out the reaction 5-O-(1-carboxyvinyl)-3-phosphoshikimate = chorismate + phosphate. Its pathway is metabolic intermediate biosynthesis; chorismate biosynthesis; chorismate from D-erythrose 4-phosphate and phosphoenolpyruvate: step 7/7. Functionally, catalyzes the anti-1,4-elimination of the C-3 phosphate and the C-6 proR hydrogen from 5-enolpyruvylshikimate-3-phosphate (EPSP) to yield chorismate, which is the branch point compound that serves as the starting substrate for the three terminal pathways of aromatic amino acid biosynthesis. This reaction introduces a second double bond into the aromatic ring system. The protein is Chorismate synthase of Syntrophotalea carbinolica (strain DSM 2380 / NBRC 103641 / GraBd1) (Pelobacter carbinolicus).